We begin with the raw amino-acid sequence, 185 residues long: Homeobox expressed in ES cells 1 (185 aa).

Residues 32–69 form a disordered region; it reads KKDCTTSVRPHRPWTDTCGDSEKGGNPPLHAPDLPSET. A DNA-binding region (homeobox) is located at residues 108–167; sequence GRRPRTAFTQNQVEVLENVFRVNCYPGIDIREDLAQKLNLEEDRIQIWFQNRRAKMKRSR.

This sequence belongs to the ANF homeobox family. As to quaternary structure, can form heterodimers with PROP1 in binding to DNA Interacts with TLE1. High levels found in the embryonic liver, lower level expression seen in the viscera, amnion and yolk sac.

The protein resides in the nucleus. Required for the normal development of the forebrain, eyes and other anterior structures such as the olfactory placodes and pituitary gland. Possible transcriptional repressor. Binds to the palindromic PIII sequence, 5'-AGCTTGAGTCTAATTGAATTAACTGTAC-3'. HESX1 and PROP1 bind as heterodimers on this palindromic site, and, in vitro, HESX1 can antagonize PROP1 activation. The polypeptide is Homeobox expressed in ES cells 1 (Hesx1) (Mus musculus (Mouse)).